The chain runs to 253 residues: 3-dehydroquinate dehydratase (253 aa).

Residues 46-48 (EWR) and Arg82 contribute to the 3-dehydroquinate site. His143 functions as the Proton donor/acceptor in the catalytic mechanism. Lys170 serves as the catalytic Schiff-base intermediate with substrate. Residues Arg213, Ser232, and Gln236 each contribute to the 3-dehydroquinate site.

The protein belongs to the type-I 3-dehydroquinase family. In terms of assembly, homodimer.

It catalyses the reaction 3-dehydroquinate = 3-dehydroshikimate + H2O. Its pathway is metabolic intermediate biosynthesis; chorismate biosynthesis; chorismate from D-erythrose 4-phosphate and phosphoenolpyruvate: step 3/7. Its activity is regulated as follows. Inhibited by flavonoids such as datiscetin, naringenin, marein and phloretin. Its function is as follows. Involved in the third step of the chorismate pathway, which leads to the biosynthesis of aromatic amino acids (AroAA). Catalyzes the cis-dehydration of 3-dehydroquinate (DHQ) and introduces the first double bond of the aromatic ring to yield 3-dehydroshikimate. The reaction involves the formation of an imine intermediate between the keto group of 3-dehydroquinate and the epsilon-amino group of Lys-170 at the active site. This is 3-dehydroquinate dehydratase from Enterococcus faecalis (strain ATCC 700802 / V583).